The chain runs to 193 residues: Proton-translocating ferredoxin:NAD(+) oxidoreductase complex subunit A (193 aa).

Transmembrane regions (helical) follow at residues 11–31, 39–59, 62–82, 102–122, 134–154, and 171–191; these read AVVVNNYVLTRFLGLCIFFGV, VGMGMAVTSVITMSSILAWVV, FVLIPFNLTFLKTVVFVLLIA, MWGIYLLLIATNCIVLAVPIL, VVNAIGSGLGFAMAIILMASL, and GVAFILAGMLALAFLGFSGMI.

This sequence belongs to the NqrDE/RnfAE family. The complex is composed of six subunits: RnfA, RnfB, RnfC, RnfD, RnfE and RnfG.

It localises to the cell membrane. Part of a membrane-bound complex that couples electron transfer with translocation of ions across the membrane. Couples electron transfer from reduced ferredoxin to NAD(+) with translocation of H(+) out of the cell. Essential for energy conservation during autotrophic growth. Contributes to ATP synthesis during heterotrophic growth. The protein is Proton-translocating ferredoxin:NAD(+) oxidoreductase complex subunit A of Clostridium ljungdahlii (strain ATCC 55383 / DSM 13528 / PETC).